The following is a 417-amino-acid chain: Histidine--tRNA ligase (417 aa).

This sequence belongs to the class-II aminoacyl-tRNA synthetase family. As to quaternary structure, homodimer.

Its subcellular location is the cytoplasm. It carries out the reaction tRNA(His) + L-histidine + ATP = L-histidyl-tRNA(His) + AMP + diphosphate + H(+). This is Histidine--tRNA ligase from Nitratidesulfovibrio vulgaris (strain DP4) (Desulfovibrio vulgaris).